The chain runs to 116 residues: Large ribosomal subunit protein uL18 (116 aa).

Belongs to the universal ribosomal protein uL18 family. As to quaternary structure, part of the 50S ribosomal subunit; part of the 5S rRNA/L5/L18/L25 subcomplex. Contacts the 5S and 23S rRNAs.

Its function is as follows. This is one of the proteins that bind and probably mediate the attachment of the 5S RNA into the large ribosomal subunit, where it forms part of the central protuberance. The polypeptide is Large ribosomal subunit protein uL18 (Pseudomonas putida (strain GB-1)).